The chain runs to 344 residues: Sensor histidine kinase GraS (344 aa).

Transmembrane regions (helical) follow at residues 18 to 38 and 43 to 63; these read IFWI…DYDI and IGFI…FTFL. Residues 126 to 332 form the Histidine kinase domain; that stretch reads EFVHDIKTPV…TFVLTFPKQN (207 aa). The residue at position 129 (His-129) is a Phosphohistidine; by autocatalysis.

Post-translationally, autophosphorylated.

It is found in the cell membrane. The catalysed reaction is ATP + protein L-histidine = ADP + protein N-phospho-L-histidine.. In terms of biological role, member of the two-component regulatory system GraR/GraS involved in resistance against cationic antimicrobial peptides (CAMPs). GraS probably functions as a sensor protein kinase which is autophosphorylated at a histidine residue and transfers its phosphate group to GraR. The protein is Sensor histidine kinase GraS (graS) of Staphylococcus haemolyticus (strain JCSC1435).